We begin with the raw amino-acid sequence, 382 residues long: Protein phosphatase 1A (382 aa).

Residue Gly-2 is the site of N-myristoyl glycine attachment. A PPM-type phosphatase domain is found at 23-291; it reads RYGLSSMQGW…DNMSVILICF (269 aa). Asp-60, Gly-61, Asp-239, and Asp-282 together coordinate Mn(2+). Phosphoserine is present on residues Ser-375 and Ser-377.

The protein belongs to the PP2C family. In terms of assembly, monomer. Interacts with SMAD2; the interaction dephosphorylates SMAD2 in its C-terminal SXS motif resulting in disruption of the SMAD2/SMAD4 complex, SMAD2 nuclear export and termination of the TGF-beta-mediated signaling. Interacts with SMAD2; the interaction dephosphorylates SMAD2 in its C-terminal SXS motif resulting in disruption of the SMAD2/SMAD4 complex, SMAD2 nuclear export and termination of the TGF-beta-mediated signaling. Interacts with the phosphorylated form of IKBKB/IKKB. Mg(2+) serves as cofactor. The cofactor is Mn(2+). In terms of processing, N-myristoylation is essential for the recognition of its substrates for dephosphorylation.

The protein resides in the nucleus. It is found in the cytoplasm. It localises to the cytosol. Its subcellular location is the membrane. The enzyme catalyses O-phospho-L-seryl-[protein] + H2O = L-seryl-[protein] + phosphate. The catalysed reaction is O-phospho-L-threonyl-[protein] + H2O = L-threonyl-[protein] + phosphate. Enzyme with a broad specificity. Negatively regulates TGF-beta signaling through dephosphorylating SMAD2 and SMAD3, resulting in their dissociation from SMAD4, nuclear export of the SMADs and termination of the TGF-beta-mediated signaling. Dephosphorylates PRKAA1 and PRKAA2. Plays an important role in the termination of TNF-alpha-mediated NF-kappa-B activation through dephosphorylating and inactivating IKBKB/IKKB. The sequence is that of Protein phosphatase 1A (PPM1A) from Oryctolagus cuniculus (Rabbit).